Reading from the N-terminus, the 89-residue chain is Probable Fe(2+)-trafficking protein (89 aa).

The protein belongs to the Fe(2+)-trafficking protein family.

Functionally, could be a mediator in iron transactions between iron acquisition and iron-requiring processes, such as synthesis and/or repair of Fe-S clusters in biosynthetic enzymes. This chain is Probable Fe(2+)-trafficking protein, found in Legionella pneumophila (strain Paris).